The following is a 114-amino-acid chain: Probable acid stress chaperone HdeA (114 aa).

An N-terminal signal peptide occupies residues 1-26; that stretch reads MIKALFNKNTALAAVAILALSGGAMA. Cysteines 46 and 94 form a disulfide.

It belongs to the HdeA family.

The protein resides in the periplasm. Its function is as follows. Required for optimal acid stress protection. Exhibits a chaperone-like activity only at low pH by suppressing non-specifically the aggregation of denaturated periplasmic proteins. Contributes to acid resistance. Not required for wild-type virulence in the BALB/c mouse model. This is Probable acid stress chaperone HdeA from Brucella abortus (strain 2308).